The primary structure comprises 68 residues: Prokaryotic ubiquitin-like protein Pup (68 aa).

Residues 1-37 (MAQERIFGTGSRREDEPDTPAPVDPPVSGAAQAQRDM) are disordered. Residues 24–62 (DPPVSGAAQAQRDMQGTDDLLAEIDGVLETNAEAFVKGF) form an ARC ATPase binding region. Glutamine 68 bears the Deamidated glutamine mark. Glutamine 68 participates in a covalent cross-link: Isoglutamyl lysine isopeptide (Gln-Lys) (interchain with K-? in acceptor proteins).

The protein belongs to the prokaryotic ubiquitin-like protein family. As to quaternary structure, strongly interacts with the proteasome-associated ATPase ARC through a hydrophobic interface; the interacting region of Pup lies in its C-terminal half. There is one Pup binding site per ARC hexamer ring. In terms of processing, is modified by deamidation of its C-terminal glutamine to glutamate by the deamidase Dop, a prerequisite to the subsequent pupylation process.

Its pathway is protein degradation; proteasomal Pup-dependent pathway. In terms of biological role, protein modifier that is covalently attached to lysine residues of substrate proteins, thereby targeting them for proteasomal degradation. The tagging system is termed pupylation. The sequence is that of Prokaryotic ubiquitin-like protein Pup from Kocuria rhizophila (strain ATCC 9341 / DSM 348 / NBRC 103217 / DC2201).